The primary structure comprises 719 residues: Transcription factor E4F1 (719 aa).

The interval 20 to 63 is required for ubiquitin ligase activity; that stretch reads NIITIQTTLGDEDEDIHKCGKCLAEFSALDAFIQHKLSRSCKRT. The segment at 59-125 is disordered; it reads SCKRTQDPQT…SEDESSSPSK (67 aa). The span at 98 to 109 shows a compositional bias: basic and acidic residues; the sequence is EKQDAKVASGDK. Residues 128-207 are mediates dimerization and DNA-binding; sequence WKLNTEGRYV…GLAFRESGAL (80 aa). 2 consecutive C2H2-type zinc fingers follow at residues 136 to 158 and 164 to 186; these read YVCDICAKTFKTTNILRTHMFTH and FVCEMCETAFRTKGSLIRHKRRH. The C2H2-type 3; degenerate zinc finger occupies 192–216; sequence YRCNQCGLAFRESGALTRHLKSLTP. 5 consecutive C2H2-type zinc fingers follow at residues 365-387, 393-415, 421-443, 449-471, and 477-499; these read YKCPHCERMFKTLNYLRVHVKGH, FKCLTCQKEFLTGYVLKKHMETH, YKCGECGKQFKAIGHVREHMRAH, YHCSFCDKSYKTKNALQVHHRTH, and YVCQHCSRGFREKSALVRHIRHH. The C2H2-type 9; degenerate zinc finger occupies 505 to 527; the sequence is FKCSKCGRGFAEHGTLNRHLRAK.

The protein localises to the nucleus. The protein resides in the nucleoplasm. It localises to the cytoplasm. The enzyme catalyses S-ubiquitinyl-[E2 ubiquitin-conjugating enzyme]-L-cysteine + [acceptor protein]-L-lysine = [E2 ubiquitin-conjugating enzyme]-L-cysteine + N(6)-ubiquitinyl-[acceptor protein]-L-lysine.. Its pathway is protein modification; protein ubiquitination. Its function is as follows. May function as a transcriptional repressor. May also function as a ubiquitin ligase. Functions in cell survival and proliferation through control of the cell cycle. This is Transcription factor E4F1 (e4f1) from Danio rerio (Zebrafish).